A 530-amino-acid chain; its full sequence is Estrogen receptor beta (530 aa).

Residues 1–148 form a modulating region; that stretch reads MEIKNSPSSL…SPSAKRDAHF (148 aa). Ser61 carries the post-translational modification Phosphoserine; alternate. O-linked (GlcNAc) serine; alternate glycosylation is present at Ser61. A phosphoserine; by MAPK mark is found at Ser87 and Ser105. NR C4-type zinc fingers lie at residues 149–169 and 185–209; these read CAVC…CEGC and CPAT…LRKC. The nuclear receptor DNA-binding region spans 149-214; that stretch reads CAVCSDYASG…RLRKCYEVGM (66 aa). Residues 264-498 enclose the NR LBD domain; sequence SPEQLVLTLL…DLLLEMLNAH (235 aa). The span at 506–515 shows a compositional bias: polar residues; that stretch reads SISGSECCST. The segment at 506 to 530 is disordered; sequence SISGSECCSTEDSKSKEGSQNLQSQ.

It belongs to the nuclear hormone receptor family. NR3 subfamily. In terms of assembly, binds DNA as a homodimer. Can form a heterodimer with ESR1. Interacts with NCOA1, NCOA3, NCOA5 and NCOA6 coactivators, leading to a strong increase of transcription of target genes. Interacts with UBE1C and AKAP13. Interacts with DNTTIP2. Interacts with CCDC62 in the presence of estradiol/E2; this interaction seems to enhance the transcription of target genes. Interacts with DNAAF4. Interacts with PRMT2. Interacts with CCAR2 (via N-terminus) in a ligand-independent manner. Interacts with RBM39, in the presence of estradiol (E2). Interacts with STUB1/CHIP. Post-translationally, phosphorylation at Ser-87 and Ser-105 recruits NCOA1. Expressed in prostate, ovary, Leydig cells and in epithelium of the efferent ductules and of the initial segment of the epididymis.

Its subcellular location is the nucleus. Functionally, nuclear hormone receptor. Binds estrogens with an affinity similar to that of ESR1/ER-alpha, and activates expression of reporter genes containing estrogen response elements (ERE) in an estrogen-dependent manner. This is Estrogen receptor beta (Esr2) from Mus musculus (Mouse).